The following is a 425-amino-acid chain: Histidine--tRNA ligase (425 aa).

The protein belongs to the class-II aminoacyl-tRNA synthetase family. As to quaternary structure, homodimer.

It is found in the cytoplasm. The enzyme catalyses tRNA(His) + L-histidine + ATP = L-histidyl-tRNA(His) + AMP + diphosphate + H(+). The sequence is that of Histidine--tRNA ligase from Shewanella sp. (strain MR-4).